We begin with the raw amino-acid sequence, 515 residues long: Interferon alpha/beta receptor 2 (515 aa).

The signal sequence occupies residues 1–26 (MLLSQNAFIFRSLNLVLMVYISLVFG). Residues 27–243 (ISYDSPDYTD…QESESAESAK (217 aa)) lie on the Extracellular side of the membrane. 2 disulfides stabilise this stretch: cysteine 39/cysteine 122 and cysteine 85/cysteine 93. 5 N-linked (GlcNAc...) asparagine glycosylation sites follow: asparagine 58, asparagine 87, asparagine 116, asparagine 188, and asparagine 192. Cysteine 207 and cysteine 227 are joined by a disulfide. The helical transmembrane segment at 244–264 (IGGIITVFLIALVLTSTIVTL) threads the bilayer. Topologically, residues 265 to 515 (KWIGYICLRN…VDLGDGYIMR (251 aa)) are cytoplasmic. Disordered stretches follow at residues 318-418 (YDDE…EGSG) and 455-515 (EMVD…YIMR). A Phosphotyrosine modification is found at tyrosine 337. Residues 362-375 (PESEEEPDLPEVDV) are compositionally biased toward acidic residues. The residue at position 400 (serine 400) is a Phosphoserine. The mediates interaction with STAT2 (and required for the recruitment of USP18) stretch occupies residues 418–444 (GGRITFNVDLNSVFLRVLDDEDSDDLE). The span at 464–488 (NVQSNHLLASGEGTQPTFPSPSSEG) shows a compositional bias: polar residues. Residue serine 467 is modified to Phosphoserine. Tyrosine 512 bears the Phosphotyrosine mark.

It belongs to the type II cytokine receptor family. Heterodimer with IFNAR1; forming the receptor for type I interferon. Interacts with JAK1. Interacts with the transcriptional factors STAT1 and STAT2. Interacts with USP18; indirectly via STAT2, it negatively regulates the assembly of the ternary interferon-IFNAR1-IFNAR2 complex and therefore type I interferon signaling. Phosphorylated on tyrosine residues upon interferon binding. Phosphorylation at Tyr-337 or Tyr-512 are sufficient to mediate interferon dependent activation of STAT1, STAT2 and STAT3 leading to antiproliferative effects on many different cell types. In terms of processing, glycosylated. Isoform 3 is detected in the urine (at protein level). Expressed in blood cells. Expressed in lymphoblastoid and fibrosarcoma cell lines.

Its subcellular location is the cell membrane. It localises to the secreted. Together with IFNAR1, forms the heterodimeric receptor for type I interferons (including interferons alpha, beta, epsilon, omega and kappa). Type I interferon binding activates the JAK-STAT signaling cascade, resulting in transcriptional activation or repression of interferon-regulated genes that encode the effectors of the interferon response. Mechanistically, type I interferon-binding brings the IFNAR1 and IFNAR2 subunits into close proximity with one another, driving their associated Janus kinases (JAKs) (TYK2 bound to IFNAR1 and JAK1 bound to IFNAR2) to cross-phosphorylate one another. The activated kinases phosphorylate specific tyrosine residues on the intracellular domains of IFNAR1 and IFNAR2, forming docking sites for the STAT transcription factors (STAT1, STAT2 and STAT). STAT proteins are then phosphorylated by the JAKs, promoting their translocation into the nucleus to regulate expression of interferon-regulated genes. Functionally, potent inhibitor of type I IFN receptor activity. In Homo sapiens (Human), this protein is Interferon alpha/beta receptor 2 (IFNAR2).